The sequence spans 494 residues: Cytochrome P450 2A5 (494 aa).

At Ser-131 the chain carries Phosphoserine. Lys-379 bears the N6-acetyllysine mark. Cys-439 contacts heme.

It belongs to the cytochrome P450 family. Heme serves as cofactor. Liver, with a strong circadian rhythmicity. Circadian expression is regulated by DBP.

Its subcellular location is the endoplasmic reticulum membrane. It localises to the microsome membrane. It catalyses the reaction an organic molecule + reduced [NADPH--hemoprotein reductase] + O2 = an alcohol + oxidized [NADPH--hemoprotein reductase] + H2O + H(+). In terms of biological role, exhibits a high coumarin 7-hydroxylase activity. In Mus musculus (Mouse), this protein is Cytochrome P450 2A5 (Cyp2a5).